The chain runs to 123 residues: Small ribosomal subunit protein bS18 (123 aa).

A compositionally biased stretch (polar residues) spans 1–10 (MADETTVSTP). A disordered region spans residues 1 to 52 (MADETTVSTPAASGTETPSTGGGGAPQGRPQGGPRGDRGPRPGGSGRDGGRK). The span at 20–34 (TGGGGAPQGRPQGGP) shows a compositional bias: gly residues.

It belongs to the bacterial ribosomal protein bS18 family. In terms of assembly, part of the 30S ribosomal subunit. Forms a tight heterodimer with protein bS6.

Functionally, binds as a heterodimer with protein bS6 to the central domain of the 16S rRNA, where it helps stabilize the platform of the 30S subunit. The polypeptide is Small ribosomal subunit protein bS18 (Koribacter versatilis (strain Ellin345)).